Reading from the N-terminus, the 248-residue chain is Granzyme F (248 aa).

Positions 1-18 are cleaved as a signal peptide; sequence MPPILILLTLLLPLRAGA. The propeptide occupies 19 to 20; that stretch reads EE. Positions 21–246 constitute a Peptidase S1 domain; the sequence is IIGGHEVKPH…YLPWISRNMK (226 aa). Cys-50 and Cys-66 are disulfide-bonded. The active-site Charge relay system is the His-65. An N-linked (GlcNAc...) asparagine glycan is attached at Asn-106. Asp-109 functions as the Charge relay system in the catalytic mechanism. 2 disulfide bridges follow: Cys-143-Cys-210 and Cys-175-Cys-189. An N-linked (GlcNAc...) asparagine glycan is attached at Asn-154. Ser-204 serves as the catalytic Charge relay system. N-linked (GlcNAc...) asparagine glycosylation occurs at Asn-223.

This sequence belongs to the peptidase S1 family. Granzyme subfamily.

Its subcellular location is the cytolytic granule. In terms of biological role, this enzyme is probably necessary for target cell lysis in cell-mediated immune responses. The chain is Granzyme F (Gzmf) from Mus musculus (Mouse).